Consider the following 390-residue polypeptide: Manganese peroxidase 2 (390 aa).

The N-terminal stretch at 1 to 23 (MAFNFAAILAFVSLAAVTSAAPS) is a signal peptide. Intrachain disulfides connect Cys-27-Cys-39, Cys-38-Cys-313, Cys-57-Cys-141, Cys-277-Cys-343, and Cys-365-Cys-372. Residues Glu-59 and Glu-63 each contribute to the Mn(2+) site. His-70 functions as the Proton acceptor in the catalytic mechanism. Positions 71, 86, 88, and 90 each coordinate Ca(2+). Residue Asn-155 is glycosylated (N-linked (GlcNAc...) asparagine). His-197 contacts heme b. Ser-198 serves as a coordination point for Ca(2+). Asp-203 is a Mn(2+) binding site. The Ca(2+) site is built by Asp-215, Thr-217, and Asp-222. Asn-241 carries N-linked (GlcNAc...) asparagine glycosylation.

It belongs to the peroxidase family. Ligninase subfamily. It depends on heme b as a cofactor. The cofactor is Ca(2+).

The protein localises to the secreted. It catalyses the reaction 2 Mn(2+) + H2O2 + 2 H(+) = 2 Mn(3+) + 2 H2O. In terms of biological role, catalyzes the oxidation of Mn(2+) to Mn(3+). The latter, acting as a diffusible redox mediator, is capable of oxidizing a variety of lignin compounds. The sequence is that of Manganese peroxidase 2 (mnp2) from Phlebia radiata (White-rot fungus).